A 177-amino-acid polypeptide reads, in one-letter code: Alkyl hydroperoxide reductase AhpD (177 aa).

Residue cysteine 131 is the Proton donor of the active site. Cysteine 131 and cysteine 134 are joined by a disulfide. The active-site Cysteine sulfenic acid (-SOH) intermediate is cysteine 134.

The protein belongs to the AhpD family. Homotrimer.

The enzyme catalyses N(6)-[(R)-dihydrolipoyl]-L-lysyl-[lipoyl-carrier protein] + a hydroperoxide = N(6)-[(R)-lipoyl]-L-lysyl-[lipoyl-carrier protein] + an alcohol + H2O. Functionally, antioxidant protein with alkyl hydroperoxidase activity. Required for the reduction of the AhpC active site cysteine residues and for the regeneration of the AhpC enzyme activity. In Streptomyces griseus subsp. griseus (strain JCM 4626 / CBS 651.72 / NBRC 13350 / KCC S-0626 / ISP 5235), this protein is Alkyl hydroperoxide reductase AhpD.